Here is a 180-residue protein sequence, read N- to C-terminus: ATP-dependent protease subunit HslV (180 aa).

Thr-10 is an active-site residue. Na(+) is bound by residues Gly-165, Cys-168, and Thr-171.

The protein belongs to the peptidase T1B family. HslV subfamily. As to quaternary structure, a double ring-shaped homohexamer of HslV is capped on each side by a ring-shaped HslU homohexamer. The assembly of the HslU/HslV complex is dependent on binding of ATP.

Its subcellular location is the cytoplasm. The catalysed reaction is ATP-dependent cleavage of peptide bonds with broad specificity.. Allosterically activated by HslU binding. Protease subunit of a proteasome-like degradation complex believed to be a general protein degrading machinery. The chain is ATP-dependent protease subunit HslV from Koribacter versatilis (strain Ellin345).